The chain runs to 179 residues: Transcription factor NF-E4 (179 aa).

Position 43 is an N6-acetyllysine (Lys-43). The disordered stretch occupies residues Ala-100 to Gly-179. Polar residues-rich tracts occupy residues Leu-143 to Ser-153 and Ala-163 to Gly-179.

In terms of assembly, component of the SSP (stage selector protein) complex, which appears to be a heteromer of TFCP2 and 2 copies of NFE4. Interacts with HDAC1 and PCAF. Isoform 2 interacts with TFCP2. Acetylation at Lys-43 prolongs the protein half-life by preventing ubiquitin-mediated degradation and reduces the interaction between NF-E4 and HDAC1, potentially maximizing the activating ability of the factor at the gamma-promoter. In terms of processing, ubiquitinated; leading to its degradation by the proteasome. Acetylation at Lys-43 prevents ubiquitination. Specifically expressed in fetal liver, cord blood and bone marrow. Also expressed in the K562 and HEL cell lines, which constitutively express the fetal globin genes.

It is found in the nucleus. Functionally, functions as part of the SSP (stage selector protein) complex, a complex that contributes to the preferential expression of the gamma-gene in fetal erythroid cells by facilitating the interaction of the gamma-globin genes with enhancer elements contained in the locus control region (LCR). The complex binds to the stage selector element (SSE) in the proximal gamma-globin promoter. In contrast, isoform 2 acts as a repressor of gamma-globin gene expression by preventing NFE2 and RNA polymerase II recruitment to the promoter. The polypeptide is Transcription factor NF-E4 (NFE4) (Homo sapiens (Human)).